Here is a 732-residue protein sequence, read N- to C-terminus: Acylamino-acid-releasing enzyme (732 aa).

Met1 is modified (N-acetylmethionine). Residues Ser185 and Ser187 each carry the phosphoserine modification. Active-site charge relay system residues include Ser587, Asp675, and His707.

Belongs to the peptidase S9C family. Homotetramer.

The protein resides in the cytoplasm. The catalysed reaction is Cleavage of an N-acetyl or N-formyl amino acid from the N-terminus of a polypeptide.. Its activity is regulated as follows. Homotetramerization is required for activity. Tetramerization results in the formation of a gated channel which is involved in substrate selection and substrate access to the catalytic sites. This enzyme catalyzes the hydrolysis of the N-terminal peptide bond of an N-acetylated peptide to generate an N-acetylated amino acid and a peptide with a free N-terminus. It preferentially cleaves off Ac-Ala, Ac-Met and Ac-Ser. Also, involved in the degradation of oxidized and glycated proteins. The protein is Acylamino-acid-releasing enzyme (Apeh) of Mus musculus (Mouse).